Consider the following 411-residue polypeptide: ATPase family AAA domain-containing protein 3C (411 aa).

Residue 177-184 coordinates ATP; sequence GPPGTGKT.

Belongs to the AAA ATPase family.

This is ATPase family AAA domain-containing protein 3C (ATAD3C) from Homo sapiens (Human).